Consider the following 388-residue polypeptide: Succinate--CoA ligase [ADP-forming] subunit beta (388 aa).

The 236-residue stretch at 9–244 (KSLFAEYGLP…PSQDDAREAH (236 aa)) folds into the ATP-grasp domain. ATP is bound by residues lysine 46, 53–55 (GRG), glutamate 99, threonine 102, and glutamate 107. Mg(2+)-binding residues include asparagine 199 and aspartate 213. Substrate is bound by residues asparagine 264 and 321–323 (GIV).

Belongs to the succinate/malate CoA ligase beta subunit family. In terms of assembly, heterotetramer of two alpha and two beta subunits. It depends on Mg(2+) as a cofactor.

The catalysed reaction is succinate + ATP + CoA = succinyl-CoA + ADP + phosphate. It carries out the reaction GTP + succinate + CoA = succinyl-CoA + GDP + phosphate. It functions in the pathway carbohydrate metabolism; tricarboxylic acid cycle; succinate from succinyl-CoA (ligase route): step 1/1. Its function is as follows. Succinyl-CoA synthetase functions in the citric acid cycle (TCA), coupling the hydrolysis of succinyl-CoA to the synthesis of either ATP or GTP and thus represents the only step of substrate-level phosphorylation in the TCA. The beta subunit provides nucleotide specificity of the enzyme and binds the substrate succinate, while the binding sites for coenzyme A and phosphate are found in the alpha subunit. This chain is Succinate--CoA ligase [ADP-forming] subunit beta, found in Shewanella sp. (strain ANA-3).